A 368-amino-acid chain; its full sequence is WAT1-related protein At5g40240 (368 aa).

Helical transmembrane passes span 18-38, 50-70, 82-102, 111-131, 142-162, 194-214, 226-246, 260-280, 292-312, and 315-335; these read VVPF…NTLF, VFVF…SVIF, PLFF…IAGC, TLAS…AVIF, ATQA…VVVL, WIIG…WYIL, ITVV…VCLF, ISLA…ALTH, ISLF…IFLG, and LHLG…TVIW. EamA domains lie at 33–161 and 208–334; these read GSNT…LVVV and ISVW…YTVI.

The protein belongs to the drug/metabolite transporter (DMT) superfamily. Plant drug/metabolite exporter (P-DME) (TC 2.A.7.4) family.

The protein resides in the membrane. The chain is WAT1-related protein At5g40240 from Arabidopsis thaliana (Mouse-ear cress).